The following is a 533-amino-acid chain: Tyrosine protein-kinase src-1 (533 aa).

Gly-2 carries the N-myristoyl glycine lipid modification. Residues 71-132 (QERETLVALY…PRNFVAKQQT (62 aa)) form the SH3 domain. The 100-residue stretch at 138–237 (WYAGKIPRNR…GLCCQLTFPA (100 aa)) folds into the SH2 domain. The Protein kinase domain maps to 262–521 (LHLKRKLGDG…TLYHFFDDYF (260 aa)). ATP contacts are provided by residues 268–276 (LGDGNFGEV) and Lys-290. The active-site Proton acceptor is Asp-381. At Tyr-416 the chain carries Phosphotyrosine; by autocatalysis. A Phosphotyrosine modification is found at Tyr-528.

The protein belongs to the protein kinase superfamily. Tyr protein kinase family. SRC subfamily. In terms of assembly, interacts (via SH2 domain and SH3 domain) with unc-5 (via cytoplasmic domain); the interaction requires kinase activity. Interacts (when activated and phosphorylated at 'Tyr-416') with ina-1 (via cytoplasmic domain) and with ced-2 (via SH2 domain). It depends on Mg(2+) as a cofactor. Requires Mn(2+) as cofactor. In terms of processing, may be phosphorylated on Tyr-528 by csk-1. Expressed in some neurons (ASE, ADF, AVA, AUA, RMDV and BAG) in the head region, anchor cell, vulva, cells around anus, body wall muscle, pharyngeal muscles in procorpus and metacorpus. Expressed in gonadal distal tip cells.

It is found in the cell membrane. Its subcellular location is the cell projection. The protein localises to the phagocytic cup. It carries out the reaction L-tyrosyl-[protein] + ATP = O-phospho-L-tyrosyl-[protein] + ADP + H(+). May be activated by autophosphorylation. May be inhibited by csk-1-mediated phosphorylation. In terms of biological role, non-receptor tyrosine-protein kinase which plays a role in endoderm development by controlling spindle orientation in EMS blastomere, probably downstream of receptor mes-1. Also involved in embryonic body morphogenesis, especially in the formation of the pharynx and the intestine. May be dispensable for pharyngeal muscle organization in the adult. Probably phosphorylates netrin receptor unc-5, to regulate distal tip cell (DTC) migration during gonad development and in axon repulsion. Plays a role in the migration of the QR neuroblast, a precursor of the AVM neuron, and in the migration of the axon cone of AVM, ALM, CAN and PVM neurons. May act downstream of migratory protein mig-13 to control AVM neuron migration. Probably downstream of integrin ina-1/pat-3, plays a role in the clearance of apoptotic cells during mid-embryogenesis. Phosphorylates ced-1 at 'Tyr-1019' which promotes ced-1 proteasomal degradation, maintaining appropriate ced-1 levels for apoptotic cell clearance. This chain is Tyrosine protein-kinase src-1, found in Caenorhabditis elegans.